A 316-amino-acid polypeptide reads, in one-letter code: 4-hydroxy-3-methylbut-2-enyl diphosphate reductase (316 aa).

Position 12 (Cys12) interacts with [4Fe-4S] cluster. Positions 41 and 74 each coordinate (2E)-4-hydroxy-3-methylbut-2-enyl diphosphate. Dimethylallyl diphosphate-binding residues include His41 and His74. Residues His41 and His74 each contribute to the isopentenyl diphosphate site. Cys96 provides a ligand contact to [4Fe-4S] cluster. His124 contributes to the (2E)-4-hydroxy-3-methylbut-2-enyl diphosphate binding site. His124 is a dimethylallyl diphosphate binding site. Residue His124 participates in isopentenyl diphosphate binding. The Proton donor role is filled by Glu126. Thr169 lines the (2E)-4-hydroxy-3-methylbut-2-enyl diphosphate pocket. Cys199 is a binding site for [4Fe-4S] cluster. (2E)-4-hydroxy-3-methylbut-2-enyl diphosphate is bound by residues Ser227, Ser228, Asn229, and Ser271. Dimethylallyl diphosphate is bound by residues Ser227, Ser228, Asn229, and Ser271. Residues Ser227, Ser228, Asn229, and Ser271 each coordinate isopentenyl diphosphate.

The protein belongs to the IspH family. Requires [4Fe-4S] cluster as cofactor.

The catalysed reaction is isopentenyl diphosphate + 2 oxidized [2Fe-2S]-[ferredoxin] + H2O = (2E)-4-hydroxy-3-methylbut-2-enyl diphosphate + 2 reduced [2Fe-2S]-[ferredoxin] + 2 H(+). It catalyses the reaction dimethylallyl diphosphate + 2 oxidized [2Fe-2S]-[ferredoxin] + H2O = (2E)-4-hydroxy-3-methylbut-2-enyl diphosphate + 2 reduced [2Fe-2S]-[ferredoxin] + 2 H(+). Its pathway is isoprenoid biosynthesis; dimethylallyl diphosphate biosynthesis; dimethylallyl diphosphate from (2E)-4-hydroxy-3-methylbutenyl diphosphate: step 1/1. It participates in isoprenoid biosynthesis; isopentenyl diphosphate biosynthesis via DXP pathway; isopentenyl diphosphate from 1-deoxy-D-xylulose 5-phosphate: step 6/6. Its function is as follows. Catalyzes the conversion of 1-hydroxy-2-methyl-2-(E)-butenyl 4-diphosphate (HMBPP) into a mixture of isopentenyl diphosphate (IPP) and dimethylallyl diphosphate (DMAPP). Acts in the terminal step of the DOXP/MEP pathway for isoprenoid precursor biosynthesis. The polypeptide is 4-hydroxy-3-methylbut-2-enyl diphosphate reductase (Xanthomonas axonopodis pv. citri (strain 306)).